Consider the following 240-residue polypeptide: UDP-2,3-diacylglucosamine hydrolase (240 aa).

Positions 8, 10, 41, 79, and 114 each coordinate Mn(2+). 79 to 80 contributes to the substrate binding site; the sequence is NR. Residues aspartate 122, serine 160, asparagine 164, lysine 167, and histidine 195 each contribute to the substrate site. Residues histidine 195 and histidine 197 each contribute to the Mn(2+) site.

The protein belongs to the LpxH family. Mn(2+) serves as cofactor.

The protein localises to the cell inner membrane. It catalyses the reaction UDP-2-N,3-O-bis[(3R)-3-hydroxytetradecanoyl]-alpha-D-glucosamine + H2O = 2-N,3-O-bis[(3R)-3-hydroxytetradecanoyl]-alpha-D-glucosaminyl 1-phosphate + UMP + 2 H(+). The protein operates within glycolipid biosynthesis; lipid IV(A) biosynthesis; lipid IV(A) from (3R)-3-hydroxytetradecanoyl-[acyl-carrier-protein] and UDP-N-acetyl-alpha-D-glucosamine: step 4/6. Functionally, hydrolyzes the pyrophosphate bond of UDP-2,3-diacylglucosamine to yield 2,3-diacylglucosamine 1-phosphate (lipid X) and UMP by catalyzing the attack of water at the alpha-P atom. Involved in the biosynthesis of lipid A, a phosphorylated glycolipid that anchors the lipopolysaccharide to the outer membrane of the cell. This Escherichia coli O6:H1 (strain CFT073 / ATCC 700928 / UPEC) protein is UDP-2,3-diacylglucosamine hydrolase.